A 453-amino-acid chain; its full sequence is MDVFPSTTPDEAVRKSAKRTAELFGSEYLLVTPSVADGSIGLSYRKKAEYSDVKELPPALAEKQAKAAAAGRAKRPKIQPQTKPQADGSGASMSLVKRAAGPAAGGVGGEGQPKSLIQRPSATRQQRPDWHPPWKLMRVISGHLGWVRSLAVEPNNEWFASGAGDRTIKIWNLATGALRLTLTGHISTVRGLAVSPRHPYLFSCGEDKMVKCWDLETNKVIRHYHGHLSGVYTLALHPRLDLLVTGGRDGVARVWDMRTRSNIHVLSGHKGTVADLKCQEADPQIITGSLDATVRLWDLAAGKTMGVLTHHKKGVRNLAIHPREFTFASASTGSIKQWKCPEGDFMQNFEGHNAVINSLAVNEDNVLFSGGDNGSMCFWDWKTGYKFQSIDTMAQPGSLDAEAGIMSATFDRTGLRLITGEADKTIKVWKPDDEATPESHPVTWAPTLGRQRY.

Positions 62-71 (EKQAKAAAAG) are enriched in low complexity. The tract at residues 62-129 (EKQAKAAAAG…PSATRQQRPD (68 aa)) is disordered. WD repeat units lie at residues 142–181 (GHLG…LRLT), 184–223 (GHIS…VIRH), 226–265 (GHLS…NIHV), 268–309 (GHKG…GVLT), 311–350 (HKKG…QNFE), 351–389 (GHNA…KFQS), and 400–439 (DAEA…TPES). Residues 432-453 (DDEATPESHPVTWAPTLGRQRY) are disordered.

This sequence belongs to the WD repeat PRL1/PRL2 family. As to quaternary structure, associated with the spliceosome.

It is found in the cytoplasm. The protein localises to the nucleus. Its function is as follows. Involved in pre-mRNA splicing and required for cell cycle progression at G2/M. The polypeptide is Pre-mRNA-splicing factor prp46 (prp46) (Aspergillus fumigatus (strain ATCC MYA-4609 / CBS 101355 / FGSC A1100 / Af293) (Neosartorya fumigata)).